Here is a 263-residue protein sequence, read N- to C-terminus: Small ribosomal subunit protein eS4, Y isoform 2 (263 aa).

The S4 RNA-binding domain maps to Leu42–Asp104.

Belongs to the eukaryotic ribosomal protein eS4 family.

The sequence is that of Small ribosomal subunit protein eS4, Y isoform 2 (RPS4Y2) from Pan troglodytes (Chimpanzee).